A 457-amino-acid polypeptide reads, in one-letter code: MVRGAVPRTTEFGELLYGKAVNLGGRVLIYGLGRSGRGVAHFLHGEGVSAFWHDLRPAPEDEALMRQLGHRQADLGGTYDLVVAAPGVPIDHRDLRVLAGRGAEIIGEVALAARLRPELPMVGITGTAGKGSTTVLIAQLLRACGLRAREGGNIDPPLLDVVDDAEVAVVELSSFQLERVPGLRLPVAVITNLGVDHLDRHGSVETYHAAKLNITAGQQSGDVLVRPADLPVPTRAQTVTFTPERLCLRDGQEVLPVADLPPGVHPANAAAALLAAEALLRHLGRAVDPAVLADALRAAQPVKGRFETVGQLGEVGFIEDSIATRTIAVESALRQARPPIAWLVGGRDKGAELAPLRAAAEGRVTRVIAFGEDGEALARDLGLPFEVIKAETGDESMDRAVRAGWEALGGAGGTGTVLLAPVGTSFDQFRDYQQRGASFRRAVQALLGTQSGSGESA.

126 to 132 lines the ATP pocket; that stretch reads GTAGKGS.

This sequence belongs to the MurCDEF family.

The protein resides in the cytoplasm. It carries out the reaction UDP-N-acetyl-alpha-D-muramoyl-L-alanine + D-glutamate + ATP = UDP-N-acetyl-alpha-D-muramoyl-L-alanyl-D-glutamate + ADP + phosphate + H(+). It participates in cell wall biogenesis; peptidoglycan biosynthesis. In terms of biological role, cell wall formation. Catalyzes the addition of glutamate to the nucleotide precursor UDP-N-acetylmuramoyl-L-alanine (UMA). The protein is UDP-N-acetylmuramoylalanine--D-glutamate ligase of Deinococcus radiodurans (strain ATCC 13939 / DSM 20539 / JCM 16871 / CCUG 27074 / LMG 4051 / NBRC 15346 / NCIMB 9279 / VKM B-1422 / R1).